We begin with the raw amino-acid sequence, 266 residues long: Thymidylate synthase (266 aa).

DUMP is bound by residues R21 and 127–128 (RR). The active-site Nucleophile is the C147. DUMP contacts are provided by residues 168–171 (RSAD), N179, and 209–211 (HIY). D171 provides a ligand contact to (6R)-5,10-methylene-5,6,7,8-tetrahydrofolate. A265 contributes to the (6R)-5,10-methylene-5,6,7,8-tetrahydrofolate binding site.

This sequence belongs to the thymidylate synthase family. Bacterial-type ThyA subfamily. In terms of assembly, homodimer.

It localises to the cytoplasm. It catalyses the reaction dUMP + (6R)-5,10-methylene-5,6,7,8-tetrahydrofolate = 7,8-dihydrofolate + dTMP. The protein operates within pyrimidine metabolism; dTTP biosynthesis. Catalyzes the reductive methylation of 2'-deoxyuridine-5'-monophosphate (dUMP) to 2'-deoxythymidine-5'-monophosphate (dTMP) while utilizing 5,10-methylenetetrahydrofolate (mTHF) as the methyl donor and reductant in the reaction, yielding dihydrofolate (DHF) as a by-product. This enzymatic reaction provides an intracellular de novo source of dTMP, an essential precursor for DNA biosynthesis. The polypeptide is Thymidylate synthase (Brachyspira hyodysenteriae (strain ATCC 49526 / WA1)).